A 174-amino-acid chain; its full sequence is ATP-dependent protease subunit HslV (174 aa).

Residue Thr2 is part of the active site. Na(+)-binding residues include Gly157, Cys160, and Thr163.

Belongs to the peptidase T1B family. HslV subfamily. In terms of assembly, a double ring-shaped homohexamer of HslV is capped on each side by a ring-shaped HslU homohexamer. The assembly of the HslU/HslV complex is dependent on binding of ATP.

Its subcellular location is the cytoplasm. It catalyses the reaction ATP-dependent cleavage of peptide bonds with broad specificity.. Allosterically activated by HslU binding. Functionally, protease subunit of a proteasome-like degradation complex believed to be a general protein degrading machinery. This is ATP-dependent protease subunit HslV from Shewanella frigidimarina (strain NCIMB 400).